A 216-amino-acid chain; its full sequence is 3-isopropylmalate dehydratase small subunit (216 aa).

This sequence belongs to the LeuD family. LeuD type 1 subfamily. As to quaternary structure, heterodimer of LeuC and LeuD.

The catalysed reaction is (2R,3S)-3-isopropylmalate = (2S)-2-isopropylmalate. The protein operates within amino-acid biosynthesis; L-leucine biosynthesis; L-leucine from 3-methyl-2-oxobutanoate: step 2/4. Its function is as follows. Catalyzes the isomerization between 2-isopropylmalate and 3-isopropylmalate, via the formation of 2-isopropylmaleate. This is 3-isopropylmalate dehydratase small subunit from Polaromonas sp. (strain JS666 / ATCC BAA-500).